Here is a 255-residue protein sequence, read N- to C-terminus: tRNA (guanine-N(1)-)-methyltransferase (255 aa).

S-adenosyl-L-methionine-binding positions include glycine 113 and 133–138 (IGDYVL).

This sequence belongs to the RNA methyltransferase TrmD family. In terms of assembly, homodimer.

It localises to the cytoplasm. The enzyme catalyses guanosine(37) in tRNA + S-adenosyl-L-methionine = N(1)-methylguanosine(37) in tRNA + S-adenosyl-L-homocysteine + H(+). Its function is as follows. Specifically methylates guanosine-37 in various tRNAs. This chain is tRNA (guanine-N(1)-)-methyltransferase, found in Escherichia coli O6:K15:H31 (strain 536 / UPEC).